The chain runs to 382 residues: Alkane 1-monooxygenase 2 (382 aa).

Helical transmembrane passes span 17–37 (GYLA…FVGV), 45–65 (WAWF…YLVG), 88–108 (VSAI…GHIF), and 114–134 (GLLG…IIAI). His-138, His-142, His-168, His-172, and His-173 together coordinate Fe cation. The helical transmembrane segment at 236 to 256 (ALFAATFGLLWGWQGVVFFLG) threads the bilayer. Fe cation-binding residues include His-312, His-315, and His-316.

This sequence belongs to the fatty acid desaturase type 1 family. AlkB subfamily. The cofactor is Fe(3+).

It is found in the cell inner membrane. It catalyses the reaction octane + 2 reduced [rubredoxin] + O2 + 2 H(+) = 2 oxidized [rubredoxin] + octan-1-ol + H2O. The protein operates within hydrocarbon metabolism; alkane degradation. Functionally, catalyzes the hydroxylation of n-alkanes in the presence of a NADH-rubredoxin reductase and rubredoxin. It preferably hydroxylases C8-C16 hydrocarbons. The polypeptide is Alkane 1-monooxygenase 2 (alkB2) (Alcanivorax borkumensis (strain ATCC 700651 / DSM 11573 / NCIMB 13689 / SK2)).